The following is a 417-amino-acid chain: CinA-like protein (417 aa).

It belongs to the CinA family.

This chain is CinA-like protein, found in Microcystis aeruginosa (strain NIES-843 / IAM M-2473).